We begin with the raw amino-acid sequence, 214 residues long: Calcineurin B homologous protein 3 (214 aa).

G2 carries N-myristoyl glycine lipidation. The region spanning 110–145 (CRKDKLRFLFNMYDTDNDSKITLEEYRKVVEELLSG) is the EF-hand domain. Ca(2+)-binding residues include D123, D125, D127, K129, and E134.

Belongs to the calcineurin regulatory subunit family. CHP subfamily. As to quaternary structure, monomer. Homodimer.

It is found in the nucleus. Its subcellular location is the cytoplasm. The protein resides in the membrane. The protein localises to the cell membrane. It localises to the cell projection. It is found in the lamellipodium. Its subcellular location is the ruffle membrane. Its function is as follows. Functions as an integral cofactor in cell pH regulation by controlling plasma membrane-type Na(+)/H(+) exchange activity. Promotes the induction of hematopoietic stem cell differentiation toward megakaryocytic lineage. Essential for the coupling of ERK cascade activation with the expression of ETS family genes in megakaryocytic differentiation. Also involved in granulocytic differentiation in a ERK-dependent manner. Inhibits the phosphatase activity of calcineurin. This chain is Calcineurin B homologous protein 3 (tesc), found in Xenopus tropicalis (Western clawed frog).